Reading from the N-terminus, the 213-residue chain is Uridine kinase (213 aa).

15–22 (GASASGKS) serves as a coordination point for ATP.

This sequence belongs to the uridine kinase family.

The protein localises to the cytoplasm. The catalysed reaction is uridine + ATP = UMP + ADP + H(+). It carries out the reaction cytidine + ATP = CMP + ADP + H(+). It functions in the pathway pyrimidine metabolism; CTP biosynthesis via salvage pathway; CTP from cytidine: step 1/3. The protein operates within pyrimidine metabolism; UMP biosynthesis via salvage pathway; UMP from uridine: step 1/1. The protein is Uridine kinase of Yersinia enterocolitica serotype O:8 / biotype 1B (strain NCTC 13174 / 8081).